The sequence spans 148 residues: Putative nickel-responsive regulator (148 aa).

Ni(2+) contacts are provided by His77, His88, His90, and Cys96.

This sequence belongs to the transcriptional regulatory CopG/NikR family. Ni(2+) is required as a cofactor.

Functionally, transcriptional regulator. The polypeptide is Putative nickel-responsive regulator (Bradyrhizobium diazoefficiens (strain JCM 10833 / BCRC 13528 / IAM 13628 / NBRC 14792 / USDA 110)).